Here is a 308-residue protein sequence, read N- to C-terminus: Lipoyl synthase 2 (308 aa).

The [4Fe-4S] cluster site is built by cysteine 49, cysteine 54, cysteine 60, cysteine 75, cysteine 79, cysteine 82, and serine 300. The region spanning 61–289 (YASGTATFLL…KRIAEGLGFK (229 aa)) is the Radical SAM core domain.

The protein belongs to the radical SAM superfamily. Lipoyl synthase family. The cofactor is [4Fe-4S] cluster.

It is found in the cytoplasm. The catalysed reaction is [[Fe-S] cluster scaffold protein carrying a second [4Fe-4S](2+) cluster] + N(6)-octanoyl-L-lysyl-[protein] + 2 oxidized [2Fe-2S]-[ferredoxin] + 2 S-adenosyl-L-methionine + 4 H(+) = [[Fe-S] cluster scaffold protein] + N(6)-[(R)-dihydrolipoyl]-L-lysyl-[protein] + 4 Fe(3+) + 2 hydrogen sulfide + 2 5'-deoxyadenosine + 2 L-methionine + 2 reduced [2Fe-2S]-[ferredoxin]. It participates in protein modification; protein lipoylation via endogenous pathway; protein N(6)-(lipoyl)lysine from octanoyl-[acyl-carrier-protein]: step 2/2. In terms of biological role, catalyzes the radical-mediated insertion of two sulfur atoms into the C-6 and C-8 positions of the octanoyl moiety bound to the lipoyl domains of lipoate-dependent enzymes, thereby converting the octanoylated domains into lipoylated derivatives. In Prochlorococcus marinus (strain SARG / CCMP1375 / SS120), this protein is Lipoyl synthase 2.